Consider the following 473-residue polypeptide: Ral-GDS-related protein (473 aa).

The interval 117-215 (EPNEAKPDDP…NQPSEELPDM (99 aa)) is disordered. Over residues 134 to 157 (ALTMPALEPAPPLLADLGPALEPE) the composition is skewed to low complexity. Positions 173–185 (GPAPAPGEGPPPG) are enriched in pro residues. Residues 219–471 (PPRLLAEQLT…YKLSCQLEPE (253 aa)) enclose the Ras-GEF domain.

The protein localises to the cytoplasmic vesicle. The protein is Ral-GDS-related protein (RGL4) of Homo sapiens (Human).